We begin with the raw amino-acid sequence, 569 residues long: Potassium-transporting ATPase potassium-binding subunit (569 aa).

10 helical membrane-spanning segments follow: residues 3–23, 64–84, 133–153, 179–199, 255–275, 281–301, 375–395, 421–441, 497–517, and 535–555; these read TEIL…YPLG, FLKS…ILLV, FVIM…MAGI, ILFP…TPMG, IVEC…LGFY, LGYV…FCNV, FGGV…AVFI, IVSL…SYVW, LALI…AGLL, and VTFG…SFFP.

It belongs to the KdpA family. In terms of assembly, the system is composed of three essential subunits: KdpA, KdpB and KdpC.

It localises to the cell inner membrane. In terms of biological role, part of the high-affinity ATP-driven potassium transport (or Kdp) system, which catalyzes the hydrolysis of ATP coupled with the electrogenic transport of potassium into the cytoplasm. This subunit binds the periplasmic potassium ions and delivers the ions to the membrane domain of KdpB through an intramembrane tunnel. The chain is Potassium-transporting ATPase potassium-binding subunit from Parabacteroides distasonis (strain ATCC 8503 / DSM 20701 / CIP 104284 / JCM 5825 / NCTC 11152).